The following is a 159-amino-acid chain: 2-C-methyl-D-erythritol 2,4-cyclodiphosphate synthase (159 aa).

A divalent metal cation is bound by residues Asp-10 and His-12. 4-CDP-2-C-methyl-D-erythritol 2-phosphate is bound by residues 10-12 (DVH) and 36-37 (HS). Residue His-44 participates in a divalent metal cation binding. 4-CDP-2-C-methyl-D-erythritol 2-phosphate is bound by residues 58–60 (DIG), 63–67 (FPDTD), 102–108 (AQAPKMA), 134–137 (TTTE), Phe-141, and Arg-144.

Belongs to the IspF family. As to quaternary structure, homotrimer. Requires a divalent metal cation as cofactor.

It carries out the reaction 4-CDP-2-C-methyl-D-erythritol 2-phosphate = 2-C-methyl-D-erythritol 2,4-cyclic diphosphate + CMP. It functions in the pathway isoprenoid biosynthesis; isopentenyl diphosphate biosynthesis via DXP pathway; isopentenyl diphosphate from 1-deoxy-D-xylulose 5-phosphate: step 4/6. In terms of biological role, involved in the biosynthesis of isopentenyl diphosphate (IPP) and dimethylallyl diphosphate (DMAPP), two major building blocks of isoprenoid compounds. Catalyzes the conversion of 4-diphosphocytidyl-2-C-methyl-D-erythritol 2-phosphate (CDP-ME2P) to 2-C-methyl-D-erythritol 2,4-cyclodiphosphate (ME-CPP) with a corresponding release of cytidine 5-monophosphate (CMP). The chain is 2-C-methyl-D-erythritol 2,4-cyclodiphosphate synthase from Shewanella piezotolerans (strain WP3 / JCM 13877).